The sequence spans 114 residues: MDTKMQSLPTTHPHPHSSSRPQSHTNNQCACSHHCRSCSQAGHPSSSSSPSPGPPTKHPKTPMHSRYSPSRPSHRGSCPKNRKTLEGKVSKRKAVRRRKRTHRAKRRSSGRRYK.

Residues 1–114 (MDTKMQSLPT…KRRSSGRRYK (114 aa)) are disordered. Residues H12, H14, H16, H24, C29, C31, C35, and C38 each coordinate Zn(2+). Positions 16–25 (HSSSRPQSHT) are enriched in low complexity. Residues 87 to 95 (GKVSKRKAV) carry the Nuclear localization signal motif. Residues 90–114 (SKRKAVRRRKRTHRAKRRSSGRRYK) are compositionally biased toward basic residues. Residue T101 is modified to Phosphothreonine; by PKA. S109 carries the post-translational modification Phosphoserine; by PKA.

This sequence belongs to the nuclear transition protein 2 family. As to expression, testis.

The protein localises to the nucleus. The protein resides in the nucleolus. It localises to the chromosome. Functionally, plays a key role in the replacement of histones to protamine in the elongating spermatids of mammals. In condensing spermatids, loaded onto the nucleosomes, where it promotes the recruitment and processing of protamines, which are responsible for histone eviction. This Rattus norvegicus (Rat) protein is Nuclear transition protein 2 (Tnp2).